We begin with the raw amino-acid sequence, 467 residues long: Cell division protein FtsP (467 aa).

Residues 1–28 constitute a signal peptide (tat-type signal); it reads MRSLTRRDFLKSGILASSLSCIPQSVMA.

This sequence belongs to the FtsP family. Post-translationally, predicted to be exported by the Tat system. The position of the signal peptide cleavage has not been experimentally proven.

It is found in the periplasm. In terms of biological role, cell division protein that is required for growth during stress conditions. May be involved in protecting or stabilizing the divisomal assembly under conditions of stress. The polypeptide is Cell division protein FtsP (Histophilus somni (strain 2336) (Haemophilus somnus)).